The chain runs to 267 residues: 4-hydroxy-tetrahydrodipicolinate reductase (267 aa).

NAD(+) is bound at residue 10–15 (GCLGKQ). Residue arginine 37 participates in NADP(+) binding. Residues 99 to 101 (GTT) and 122 to 125 (TTNV) contribute to the NAD(+) site. Residue histidine 154 is the Proton donor/acceptor of the active site. A (S)-2,3,4,5-tetrahydrodipicolinate-binding site is contributed by histidine 155. The active-site Proton donor is lysine 158. A (S)-2,3,4,5-tetrahydrodipicolinate-binding site is contributed by 164-165 (GT).

This sequence belongs to the DapB family.

It localises to the cytoplasm. It carries out the reaction (S)-2,3,4,5-tetrahydrodipicolinate + NAD(+) + H2O = (2S,4S)-4-hydroxy-2,3,4,5-tetrahydrodipicolinate + NADH + H(+). It catalyses the reaction (S)-2,3,4,5-tetrahydrodipicolinate + NADP(+) + H2O = (2S,4S)-4-hydroxy-2,3,4,5-tetrahydrodipicolinate + NADPH + H(+). The protein operates within amino-acid biosynthesis; L-lysine biosynthesis via DAP pathway; (S)-tetrahydrodipicolinate from L-aspartate: step 4/4. Functionally, catalyzes the conversion of 4-hydroxy-tetrahydrodipicolinate (HTPA) to tetrahydrodipicolinate. The sequence is that of 4-hydroxy-tetrahydrodipicolinate reductase from Ehrlichia chaffeensis (strain ATCC CRL-10679 / Arkansas).